The following is a 705-amino-acid chain: Elongation factor G (705 aa).

The region spanning 8-289 (VNYRNIGISA…TVINYLPSPK (282 aa)) is the tr-type G domain. GTP contacts are provided by residues 17–24 (AHIDAGKT), 88–92 (DTPGH), and 142–145 (NKMD).

The protein belongs to the TRAFAC class translation factor GTPase superfamily. Classic translation factor GTPase family. EF-G/EF-2 subfamily.

It localises to the cytoplasm. Catalyzes the GTP-dependent ribosomal translocation step during translation elongation. During this step, the ribosome changes from the pre-translocational (PRE) to the post-translocational (POST) state as the newly formed A-site-bound peptidyl-tRNA and P-site-bound deacylated tRNA move to the P and E sites, respectively. Catalyzes the coordinated movement of the two tRNA molecules, the mRNA and conformational changes in the ribosome. The polypeptide is Elongation factor G (Wigglesworthia glossinidia brevipalpis).